A 326-amino-acid chain; its full sequence is Eukaryotic translation initiation factor 3 subunit I (326 aa).

WD repeat units follow at residues Gly8 to Thr47, Gly50 to Ser89, Met145 to Asp184, Asp188 to Thr227, and Gly285 to Glu326.

This sequence belongs to the eIF-3 subunit I family. In terms of assembly, component of the eukaryotic translation initiation factor 3 (eIF-3) complex. The eIF-3 complex interacts with pix.

The protein localises to the cytoplasm. Its function is as follows. Component of the eukaryotic translation initiation factor 3 (eIF-3) complex, which is involved in protein synthesis of a specialized repertoire of mRNAs and, together with other initiation factors, stimulates binding of mRNA and methionyl-tRNAi to the 40S ribosome. The eIF-3 complex specifically targets and initiates translation of a subset of mRNAs involved in cell proliferation. The sequence is that of Eukaryotic translation initiation factor 3 subunit I from Drosophila grimshawi (Hawaiian fruit fly).